Consider the following 375-residue polypeptide: tRNA-specific 2-thiouridylase MnmA 3 (375 aa).

ATP contacts are provided by residues Gly11–Ser18 and Met37. Cys104 acts as the Nucleophile in catalysis. An intrachain disulfide couples Cys104 to Cys201. Gly128 serves as a coordination point for ATP. The interaction with tRNA stretch occupies residues Lys150 to Gln152. Residue Cys201 is the Cysteine persulfide intermediate of the active site. The tract at residues Arg309–Tyr310 is interaction with tRNA.

It belongs to the MnmA/TRMU family.

The protein localises to the cytoplasm. The catalysed reaction is S-sulfanyl-L-cysteinyl-[protein] + uridine(34) in tRNA + AH2 + ATP = 2-thiouridine(34) in tRNA + L-cysteinyl-[protein] + A + AMP + diphosphate + H(+). Catalyzes the 2-thiolation of uridine at the wobble position (U34) of tRNA, leading to the formation of s(2)U34. In Phocaeicola vulgatus (strain ATCC 8482 / DSM 1447 / JCM 5826 / CCUG 4940 / NBRC 14291 / NCTC 11154) (Bacteroides vulgatus), this protein is tRNA-specific 2-thiouridylase MnmA 3.